Consider the following 393-residue polypeptide: Na(+)/H(+) antiporter NhaA (393 aa).

Transmembrane regions (helical) follow at residues 18 to 38 (AGGV…NSPW), 65 to 85 (MLIW…GLEI), 101 to 121 (MLPA…YAAI), 131 to 151 (GWGI…VLLG), 160 to 180 (VFLT…IAFF), 184 to 204 (NLSP…LGLN), 210 to 230 (AVGP…KSGI), 260 to 280 (ALQP…NAGV), 298 to 318 (IAFG…WLLI), 334 to 354 (FFGV…IGSL), and 369 to 389 (IGVL…LLAS).

It belongs to the NhaA Na(+)/H(+) (TC 2.A.33) antiporter family.

The protein localises to the cell inner membrane. The catalysed reaction is Na(+)(in) + 2 H(+)(out) = Na(+)(out) + 2 H(+)(in). Functionally, na(+)/H(+) antiporter that extrudes sodium in exchange for external protons. The polypeptide is Na(+)/H(+) antiporter NhaA (Albidiferax ferrireducens (strain ATCC BAA-621 / DSM 15236 / T118) (Rhodoferax ferrireducens)).